A 281-amino-acid polypeptide reads, in one-letter code: 2,3,4,5-tetrahydropyridine-2,6-dicarboxylate N-succinyltransferase (281 aa).

Substrate-binding residues include arginine 108 and aspartate 145.

This sequence belongs to the transferase hexapeptide repeat family. Homotrimer.

Its subcellular location is the cytoplasm. The catalysed reaction is (S)-2,3,4,5-tetrahydrodipicolinate + succinyl-CoA + H2O = (S)-2-succinylamino-6-oxoheptanedioate + CoA. It participates in amino-acid biosynthesis; L-lysine biosynthesis via DAP pathway; LL-2,6-diaminopimelate from (S)-tetrahydrodipicolinate (succinylase route): step 1/3. This is 2,3,4,5-tetrahydropyridine-2,6-dicarboxylate N-succinyltransferase from Parvibaculum lavamentivorans (strain DS-1 / DSM 13023 / NCIMB 13966).